The primary structure comprises 327 residues: Tryptophan--tRNA ligase (327 aa).

ATP is bound by residues 9–11 (QPS) and 17–18 (GN). A 'HIGH' region motif is present at residues 10–18 (PSGDIHIGN). Residue D132 participates in L-tryptophan binding. ATP contacts are provided by residues 144-146 (GED), I183, and 192-196 (KMSKS). A 'KMSKS' region motif is present at residues 192–196 (KMSKS).

Belongs to the class-I aminoacyl-tRNA synthetase family. In terms of assembly, homodimer.

It localises to the cytoplasm. The catalysed reaction is tRNA(Trp) + L-tryptophan + ATP = L-tryptophyl-tRNA(Trp) + AMP + diphosphate + H(+). In terms of biological role, catalyzes the attachment of tryptophan to tRNA(Trp). The sequence is that of Tryptophan--tRNA ligase from Caldanaerobacter subterraneus subsp. tengcongensis (strain DSM 15242 / JCM 11007 / NBRC 100824 / MB4) (Thermoanaerobacter tengcongensis).